The primary structure comprises 129 residues: Bacteriohemerythrin (129 aa).

His19, His59, Glu63, His78, His82, His119, and Asp124 together coordinate Fe cation.

The protein belongs to the hemerythrin family. Monomer.

Oxygen-binding protein. May be involved in a storage mechanism or for delivery to oxygen-requiring enzymes. The oxygen-binding site contains two iron atoms. This chain is Bacteriohemerythrin, found in Clostridium acetobutylicum (strain ATCC 824 / DSM 792 / JCM 1419 / IAM 19013 / LMG 5710 / NBRC 13948 / NRRL B-527 / VKM B-1787 / 2291 / W).